We begin with the raw amino-acid sequence, 256 residues long: Zinc import ATP-binding protein ZnuC (256 aa).

Residues 6-221 enclose the ABC transporter domain; that stretch reads IAAEGLSIRV…PEYRALFGTG (216 aa). Position 38–45 (38–45) interacts with ATP; it reads GPNGSGKS. Residues 237 to 256 form a disordered region; sequence HDDDCGHDHGAEHMHPHGDR.

It belongs to the ABC transporter superfamily. Zinc importer (TC 3.A.1.15.5) family. The complex is composed of two ATP-binding proteins (ZnuC), two transmembrane proteins (ZnuB) and a solute-binding protein (ZnuA).

It is found in the cell inner membrane. It carries out the reaction Zn(2+)(out) + ATP(in) + H2O(in) = Zn(2+)(in) + ADP(in) + phosphate(in) + H(+)(in). Its function is as follows. Part of the ABC transporter complex ZnuABC involved in zinc import. Responsible for energy coupling to the transport system. This is Zinc import ATP-binding protein ZnuC from Ruegeria pomeroyi (strain ATCC 700808 / DSM 15171 / DSS-3) (Silicibacter pomeroyi).